The sequence spans 1007 residues: Ephrin type-A receptor 10 (1007 aa).

The N-terminal stretch at 1–22 is a signal peptide; sequence METGAGPHPLRLFVCLIPLCLA. Topologically, residues 23–565 are extracellular; that stretch reads LLLGPGRPGT…APGSRDQSPA (543 aa). The Eph LBD domain maps to 35-216; that stretch reads EVILLDSKAS…YYKQCRATVR (182 aa). Asn311 carries an N-linked (GlcNAc...) asparagine glycan. 2 disordered regions span residues 323-343 and 467-486; these read ARSP…APRD and PQSV…PGTN. Fibronectin type-III domains lie at 340–452 and 456–554; these read APRD…TGPG and EEDE…TPGE. A glycan (N-linked (GlcNAc...) asparagine) is linked at Asn486. The helical transmembrane segment at 566–586 threads the bilayer; it reads VVVTVVTISALLVLGSVMSVL. Topologically, residues 587 to 1007 are cytoplasmic; it reads AIWRRPCDGK…LQLQGQGVQV (421 aa). One can recognise a Protein kinase domain in the interval 644 to 899; sequence VTLEKSLGAG…PRFSQIHSIL (256 aa). The SAM domain occupies 932-996; the sequence is PSFGSVGAWL…LSGISALQTR (65 aa).

The protein belongs to the protein kinase superfamily. Tyr protein kinase family. Ephrin receptor subfamily. In terms of tissue distribution, expressed in the cochlea, in the organ of Corti, spiral ganglion, and stria vascularis.

The protein localises to the cell membrane. It carries out the reaction L-tyrosyl-[protein] + ATP = O-phospho-L-tyrosyl-[protein] + ADP + H(+). Receptor for members of the ephrin-A family. Binds to EFNA3, EFNA4 and EFNA5. This is Ephrin type-A receptor 10 (Epha10) from Mus musculus (Mouse).